Reading from the N-terminus, the 182-residue chain is Translation initiation factor IF-3 (182 aa).

A disordered region spans residues 1–22; the sequence is MPLGDCNISTPDNKQNRKNQEI.

Belongs to the IF-3 family. Monomer.

The protein resides in the cytoplasm. IF-3 binds to the 30S ribosomal subunit and shifts the equilibrium between 70S ribosomes and their 50S and 30S subunits in favor of the free subunits, thus enhancing the availability of 30S subunits on which protein synthesis initiation begins. This is Translation initiation factor IF-3 from Xanthomonas axonopodis pv. citri (strain 306).